Consider the following 692-residue polypeptide: Protein arginine N-methyltransferase 7 (692 aa).

SAM-dependent MTase PRMT-type domains lie at 14–359 and 368–692; these read ENSW…YSLW and AKTV…QEKR.

Belongs to the class I-like SAM-binding methyltransferase superfamily. Protein arginine N-methyltransferase family. PRMT7 subfamily.

Its function is as follows. Essential arginine methyltransferase that can both catalyze the formation of omega-N monomethylarginine (MMA) and symmetrical dimethylarginine (sDMA). Specifically mediates the symmetrical dimethylation of arginine residues in the small nuclear ribonucleoproteins SmD1 and SmD3. In Drosophila persimilis (Fruit fly), this protein is Protein arginine N-methyltransferase 7 (Art7).